Here is a 364-residue protein sequence, read N- to C-terminus: Ribosomal RNA large subunit methyltransferase F (364 aa).

Positions 1–30 are disordered; sequence MTNKRKSAKPLEPAKRAPKPRTKKSRDLSA.

Belongs to the methyltransferase superfamily. METTL16/RlmF family.

The protein resides in the cytoplasm. It catalyses the reaction adenosine(1618) in 23S rRNA + S-adenosyl-L-methionine = N(6)-methyladenosine(1618) in 23S rRNA + S-adenosyl-L-homocysteine + H(+). Functionally, specifically methylates the adenine in position 1618 of 23S rRNA. The chain is Ribosomal RNA large subunit methyltransferase F from Vibrio vulnificus (strain CMCP6).